A 699-amino-acid chain; its full sequence is 4-alpha-glucanotransferase (699 aa).

The protein belongs to the disproportionating enzyme family.

Its subcellular location is the cytoplasm. It carries out the reaction Transfers a segment of a (1-&gt;4)-alpha-D-glucan to a new position in an acceptor, which may be glucose or a (1-&gt;4)-alpha-D-glucan.. The chain is 4-alpha-glucanotransferase (malQ) from Haemophilus influenzae (strain ATCC 51907 / DSM 11121 / KW20 / Rd).